The sequence spans 233 residues: GSK-3-binding protein FRAT2 (233 aa).

The tract at residues 1–24 (MPCRREEEEEAGEEAEGEEEEDDS) is disordered. The segment covering 7-24 (EEEEAGEEAEGEEEEDDS) has biased composition (acidic residues). The tract at residues 174-196 (DPHRLLQQLVLSGNLIKEAVRRL) is involved in GSK-3 binding. The interval 204 to 233 (AATGPASAPGPGGGRSGPDRIALQPSGSLL) is disordered.

It belongs to the GSK-3-binding protein family. As to quaternary structure, binds GSK-3 and prevents GSK-3-dependent phosphorylation.

Positively regulates the Wnt signaling pathway by stabilizing beta-catenin through the association with GSK-3. In Homo sapiens (Human), this protein is GSK-3-binding protein FRAT2 (FRAT2).